Reading from the N-terminus, the 1124-residue chain is FHF complex subunit HOOK-interacting protein 1B (1124 aa).

Disordered regions lie at residues 1 to 25, 461 to 542, 577 to 599, 713 to 732, and 838 to 900; these read MSWL…PSSP, APSG…QLSD, GENP…PSLS, KKVK…GMNG, and ERVR…PLGQ. The span at 509-532 shows a compositional bias: low complexity; that stretch reads ANPSSSGSENAPSSPRGSVSSPLS. Residues 583-594 are compositionally biased toward pro residues; the sequence is NSAPLPPPPPTS. 2 stretches are compositionally biased toward basic and acidic residues: residues 838-858 and 875-884; these read ERVR…RESR and TEQRSSETKP.

This sequence belongs to the FHIP family. In terms of assembly, component of the FTS/Hook/FHIP complex (FHF complex), composed of AKTIP/FTS, FHIP1B, and one or more members of the Hook family of proteins HOOK1, HOOK2, and HOOK3. The FHF complex associates with the homotypic vesicular sorting complex (the HOPS complex).

Its function is as follows. Component of the FTS/Hook/FHIP complex (FHF complex). The FHF complex may function to promote vesicle trafficking and/or fusion via the homotypic vesicular protein sorting complex (the HOPS complex). FHF complex promotes the distribution of AP-4 complex to the perinuclear area of the cell. The chain is FHF complex subunit HOOK-interacting protein 1B (fhip1b) from Danio rerio (Zebrafish).